Here is a 642-residue protein sequence, read N- to C-terminus: MQPRSERPAGRTQSPEHGSPGPGPEAPPPPPPQPPAPEAERTRPRQARPAAPMEGAVQLLSREGHSVAHNSKRHYHDAFVAMSRMRQRGLLCDIVLHVAAKEIRAHKVVLASCSPYFHAMFTNEMSESRQTHVTLHDIDPQALDQLVQFAYTAEIVVGEGNVQTLLPAASLLQLNGVRDACCKFLLSQLDPSNCLGIRGFADAHSCSDLLKAAHRYVLQHFVDVAKTEEFMLLPLKQVLELVSSDSLNVPSEEEVYRAVLSWVKHDVDARRQHVPRLMKCVRLPLLSRDFLLGHVDAESLVRHHPDCKDLLIEALKFHLLPEQRGVLGTSRTRPRRCEGAGPVLFAVGGGSLFAIHGDCEAYDTRTDRWHVVASMSTRRARVGVAAVGNRLYAVGGYDGTSDLATVESYDPVTNTWQPEVSMGTRRSCLGVAALHGLLYSAGGYDGASCLNSAERYDPLTGTWTSVAAMSTRRRYVRVATLDGNLYAVGGYDSSSHLATVEKYEPQVNVWSPVASMLSRRSSAGVAVLEGALYVAGGNDGTSCLNSVERYSPKAGAWESVAPMNIRRSTHDLVAMDGWLYAVGGNDGSSSLNSIEKYNPRTNKWVAASCMFTRRSSVGVAVLELLNFPPPSSPTLSVSSTSL.

Positions 1-53 (MQPRSERPAGRTQSPEHGSPGPGPEAPPPPPPQPPAPEAERTRPRQARPAAPM) are disordered. Over residues 21-37 (GPGPEAPPPPPPQPPAP) the composition is skewed to pro residues. Residues 92-159 (CDIVLHVAAK…AYTAEIVVGE (68 aa)) form the BTB domain. Residues 194 to 296 (CLGIRGFADA…SRDFLLGHVD (103 aa)) enclose the BACK domain. Residues 289-641 (DFLLGHVDAE…SPTLSVSSTS (353 aa)) form an interaction with F-actin region. Kelch repeat units lie at residues 343–389 (VLFA…AVGN), 390–436 (RLYA…ALHG), 438–483 (LYSA…TLDG), 484–530 (NLYA…VLEG), 532–577 (LYVA…AMDG), and 578–624 (WLYA…VLEL). The tract at residues 640–642 (TSL) is interaction with PDZK1.

As to quaternary structure, interacts with F-actin; the interaction disrupts the F-actin structures and leads to marked changes of neuronal morphology. Component of a complex, composed of PDZK1, SYNGAP1, KLHL17 and NMDA receptors. Interacts directly with PDZK1 (via PDZ1 domain); the interaction is important for integrity of actin cytoskeleton structures in neurons. Interacts with DLG4 and SYNGAP1. Interacts (via kelch repeats) with GRIK2 (via C-terminus); the interaction targets GRIK2 for degradation via ubiquitin-proteasome pathway. Interacts with GRIK1. Interacts with (via BTB domain) CUL3; the interaction regulates surface GRIK2 expression.

It localises to the postsynaptic density. The protein resides in the synapse. It functions in the pathway protein modification; protein ubiquitination. Functionally, substrate-recognition component of some cullin-RING-based BCR (BTB-CUL3-RBX1) E3 ubiquitin-protein ligase complexes. The BCR(KLHL17) complex mediates the ubiquitination and subsequent degradation of GLUR6. May play a role in the actin-based neuronal function. In Homo sapiens (Human), this protein is Kelch-like protein 17 (KLHL17).